We begin with the raw amino-acid sequence, 206 residues long: LexA repressor (206 aa).

The segment at residues 27 to 47 (YEEIRQNLGFRSLNAVFKHLK) is a DNA-binding region (H-T-H motif). Residues S120 and K157 each act as for autocatalytic cleavage activity in the active site.

This sequence belongs to the peptidase S24 family. In terms of assembly, homodimer.

It catalyses the reaction Hydrolysis of Ala-|-Gly bond in repressor LexA.. Its function is as follows. Represses a number of genes involved in the response to DNA damage (SOS response), including recA and lexA. In the presence of single-stranded DNA, RecA interacts with LexA causing an autocatalytic cleavage which disrupts the DNA-binding part of LexA, leading to derepression of the SOS regulon and eventually DNA repair. The sequence is that of LexA repressor from Syntrophobacter fumaroxidans (strain DSM 10017 / MPOB).